Reading from the N-terminus, the 118-residue chain is Protein TusC (118 aa).

Belongs to the DsrF/TusC family. Heterohexamer, formed by a dimer of trimers. The hexameric TusBCD complex contains 2 copies each of TusB, TusC and TusD. The TusBCD complex interacts with TusE.

Its subcellular location is the cytoplasm. Its function is as follows. Part of a sulfur-relay system required for 2-thiolation of 5-methylaminomethyl-2-thiouridine (mnm(5)s(2)U) at tRNA wobble positions. This is Protein TusC from Salmonella gallinarum (strain 287/91 / NCTC 13346).